We begin with the raw amino-acid sequence, 149 residues long: Transcriptional repressor NrdR (149 aa).

A zinc finger spans residues 3 to 34 (CPFCAAVDTKVIDSRLVGDGSQVRRRRQCLEC). One can recognise an ATP-cone domain in the interval 49–139 (PRVIKSDDIR…VYRSFEDIRE (91 aa)).

It belongs to the NrdR family. Zn(2+) serves as cofactor.

Functionally, negatively regulates transcription of bacterial ribonucleotide reductase nrd genes and operons by binding to NrdR-boxes. The chain is Transcriptional repressor NrdR from Photorhabdus laumondii subsp. laumondii (strain DSM 15139 / CIP 105565 / TT01) (Photorhabdus luminescens subsp. laumondii).